A 310-amino-acid chain; its full sequence is UPF0761 membrane protein VFMJ11_0098 (310 aa).

6 consecutive transmembrane segments (helical) span residues 34-54, 97-117, 136-156, 178-198, 207-227, and 242-262; these read YMAY…LSVL, MTAV…SSID, FSLY…SLAA, LLGW…YLLV, HALI…VGFA, and ALAA…IVLI.

This sequence belongs to the UPF0761 family.

The protein resides in the cell inner membrane. The chain is UPF0761 membrane protein VFMJ11_0098 from Aliivibrio fischeri (strain MJ11) (Vibrio fischeri).